Here is a 362-residue protein sequence, read N- to C-terminus: Protein RecA (362 aa).

Residue 77 to 84 participates in ATP binding; that stretch reads GPESSGKT.

It belongs to the RecA family.

The protein localises to the cytoplasm. Its function is as follows. Can catalyze the hydrolysis of ATP in the presence of single-stranded DNA, the ATP-dependent uptake of single-stranded DNA by duplex DNA, and the ATP-dependent hybridization of homologous single-stranded DNAs. It interacts with LexA causing its activation and leading to its autocatalytic cleavage. The polypeptide is Protein RecA (Rhizobium etli (strain ATCC 51251 / DSM 11541 / JCM 21823 / NBRC 15573 / CFN 42)).